The following is a 219-amino-acid chain: Ribose-5-phosphate isomerase A (219 aa).

Substrate-binding positions include 28–31 (SGST), 81–84 (DGAD), and 94–97 (KGGG). Glutamate 103 acts as the Proton acceptor in catalysis. Lysine 121 is a binding site for substrate.

It belongs to the ribose 5-phosphate isomerase family. As to quaternary structure, homodimer.

It carries out the reaction aldehydo-D-ribose 5-phosphate = D-ribulose 5-phosphate. It participates in carbohydrate degradation; pentose phosphate pathway; D-ribose 5-phosphate from D-ribulose 5-phosphate (non-oxidative stage): step 1/1. Its function is as follows. Catalyzes the reversible conversion of ribose-5-phosphate to ribulose 5-phosphate. This chain is Ribose-5-phosphate isomerase A, found in Actinobacillus pleuropneumoniae serotype 3 (strain JL03).